The following is an 802-amino-acid chain: Spondin-1 (802 aa).

The N-terminal stretch at 1–23 (MAARLRPLALRLLARTFPLVARG) is a signal peptide. Positions 24–189 (FSDETLEKAA…DSASEGVTDK (166 aa)) constitute a Reelin domain. Disulfide bonds link Cys39–Cys123, Cys151–Cys177, Cys194–Cys331, Cys195–Cys335, Cys197–Cys410, Cys438–Cys475, Cys449–Cys484, Cys454–Cys489, Cys497–Cys533, Cys508–Cys512, Cys543–Cys549, Cys554–Cys590, Cys565–Cys569, Cys600–Cys605, Cys610–Cys645, Cys621–Cys625, and Cys655–Cys660. In terms of domain architecture, Spondin spans 190-383 (PTLDCCACGT…LTSLDHPQSP (194 aa)). Asn209 carries an N-linked (GlcNAc...) asparagine glycan. Residues Asp320, Asp349, and Asp353 each coordinate Ca(2+). 6 consecutive TSP type-1 domains span residues 437 to 490 (TCIY…PGCS), 496 to 550 (TCMM…EECS), 553 to 606 (SCLV…PECH), 609 to 661 (PCLL…PECP), 663 to 716 (DCEL…RKCL), and 749 to 801 (VCRL…NVHP). N-linked (GlcNAc...) asparagine glycosylation occurs at Asn676.

The protein resides in the secreted. Its subcellular location is the extracellular space. The protein localises to the extracellular matrix. In terms of biological role, cell adhesion protein that promotes the attachment of spinal cord and sensory neuron cells and the outgrowth of neurites in vitro. May contribute to the growth and guidance of axons in both the spinal cord and the PNS. Somite-derived spondin 1 is an inhibitory signal involved in patterning the segmental migration of neural crest cells and their topographical segregation within the rostral somites in vitro. May be required to prevent the lateral drifting of the commissural axons after having crossed the floor plate. The protein is Spondin-1 (SPON1) of Gallus gallus (Chicken).